Consider the following 494-residue polypeptide: Glutamate--tRNA ligase (494 aa).

The 'HIGH' region signature appears at 9-19 (PSPTGDPHLGT). Positions 250-254 (KLSKR) match the 'KMSKS' region motif. Residue lysine 253 coordinates ATP.

This sequence belongs to the class-I aminoacyl-tRNA synthetase family. Glutamate--tRNA ligase type 1 subfamily. Monomer.

The protein resides in the cytoplasm. The catalysed reaction is tRNA(Glu) + L-glutamate + ATP = L-glutamyl-tRNA(Glu) + AMP + diphosphate. In terms of biological role, catalyzes the attachment of glutamate to tRNA(Glu) in a two-step reaction: glutamate is first activated by ATP to form Glu-AMP and then transferred to the acceptor end of tRNA(Glu). This chain is Glutamate--tRNA ligase, found in Pseudoalteromonas translucida (strain TAC 125).